The sequence spans 161 residues: Transcription antitermination protein NusB (161 aa).

This sequence belongs to the NusB family.

Functionally, involved in transcription antitermination. Required for transcription of ribosomal RNA (rRNA) genes. Binds specifically to the boxA antiterminator sequence of the ribosomal RNA (rrn) operons. The protein is Transcription antitermination protein NusB of Syntrophus aciditrophicus (strain SB).